The chain runs to 157 residues: MRRQTLPPEALDDTDRAILNRLQEGFPLTPRPFDDAGAALGLTGAQLIERLERLRAIGAITRFGPFYDAAAMGGAFCLCALSAPQADFDRIAALVNAHPEVAHNYARDHALNMWFVLATATPEGIAETAGRIEAETGLTVWRFPKLREFFIGFRVAA.

Belongs to the Ahb/Nir family. As to quaternary structure, forms a complex composed of NirDL, NirG and NirH. All proteins are required for the total conversion of siroheme to didecarboxysiroheme.

It catalyses the reaction siroheme + 2 H(+) = 12,18-didecarboxysiroheme + 2 CO2. It functions in the pathway porphyrin-containing compound metabolism. Functionally, involved in heme d1 biosynthesis. Catalyzes the decarboxylation of siroheme into didecarboxysiroheme. Siroheme is probably decarboxylated to monodecarboxysiroheme, which is in turn decarboxylated to didecarboxysiroheme. The protein is Siroheme decarboxylase NirG subunit of Paracoccus pantotrophus (Thiosphaera pantotropha).